The sequence spans 326 residues: Protease HtpX homolog (326 aa).

A run of 2 helical transmembrane segments spans residues 10-30 and 41-61; these read LNMA…ALAV and VGLM…QWLF. Histidine 147 contributes to the Zn(2+) binding site. Glutamate 148 is an active-site residue. Zn(2+) is bound at residue histidine 151. Helical transmembrane passes span 159-179 and 197-217; these read LLMA…WIFW and LLFL…LLVL. Residue glutamate 224 coordinates Zn(2+).

This sequence belongs to the peptidase M48B family. The cofactor is Zn(2+).

It is found in the cell membrane. The polypeptide is Protease HtpX homolog (Saccharolobus islandicus (strain Y.N.15.51 / Yellowstone #2) (Sulfolobus islandicus)).